A 472-amino-acid chain; its full sequence is FAD-dependent monooxygenase ltmM (472 aa).

The helical transmembrane segment at 7-27 (VIIVGGSVAGLSLAHCLEKIG) threads the bilayer. Residues E34, G48, and R107 each coordinate FAD. An N-linked (GlcNAc...) asparagine glycan is attached at N186. D306 and A319 together coordinate FAD. The chain crosses the membrane as a helical span at residues 450–470 (IVYALYLVAAAAFILYCLSSL).

It belongs to the paxM FAD-dependent monooxygenase family. It depends on FAD as a cofactor.

It is found in the membrane. It functions in the pathway secondary metabolite biosynthesis. In terms of biological role, FAD-dependent monooxygenase; part of the gene cluster that mediates the biosynthesis of lolitrems, indole-diterpene mycotoxins that are potent tremorgens in mammals, and are synthesized by clavicipitaceous fungal endophytes in association with their grass hosts. The geranylgeranyl diphosphate (GGPP) synthase ltmG is proposed to catalyze the first step in lolitrem biosynthesis. LtmG catalyzes a series of iterative condensations of isopentenyl diphosphate (IPP) with dimethylallyl diphosphate (DMAPP), geranyl diphosphate (GPP), and farnesyl diphosphate (FPP), to form GGPP. GGPP then condenses with indole-3-glycerol phosphate to form 3-geranylgeranylindole, an acyclic intermediate, to be incorporated into paxilline. Either ltmG or ltmC could be responsible for this step, as both are putative prenyl transferases. The FAD-dependent monooxygenase ltmM then catalyzes the epoxidation of the two terminal alkenes of the geranylgeranyl moiety, which is subsequently cyclized by ltmC, to paspaline. The cytochrome P450 monooxygenases ltmQ and ltmP can sequentially oxidize paspaline to terpendole E and terpendole F. Alternatively, ltmP converts paspaline to an intermediate which is oxidized by ltmQ to terpendole F. LtmF, ltmK, ltmE and ltmJ appear to be unique to the epichloe endophytes. The prenyltransferase ltmF is involved in the 27-hydroxyl-O-prenylation. The cytochrome P450 monooxygenase ltmK is required for the oxidative acetal ring formation. The multi-functional prenyltransferase ltmE is required for C20- and C21-prenylations of the indole ring of paspalanes and acts together with the cytochrome P450 monooxygenase ltmJ to yield lolitremanes by multiple oxidations and ring closures. The stereoisomer pairs of lolitriol and lolitrem N or lolitrem B and lolitrem F may be attributed to variations in the way in which ring closure can occur under the action of ltmJ. While the major product of this pathway is lolitrem B, the prenyl transferases and cytochrome P450 monooxygenases identified in this pathway have a remarkable versatility in their regio- and stereo-specificities to generate a diverse range of metabolites that are products of a metabolic grid rather than a linear pathway. The sequence is that of FAD-dependent monooxygenase ltmM (ltmM) from Epichloe festucae (strain Fl1).